A 97-amino-acid chain; its full sequence is Zinc metalloproteinase-disintegrin-like bothrojarin-4 (97 aa).

A Disintegrin domain is found at 4–90 (PPVCGNYFVE…DCPTDRFRRN (87 aa)). Residues Val-6, Asn-9, Phe-11, Glu-13, Glu-16, and Asp-19 each coordinate Ca(2+). Cystine bridges form between Cys-7-Cys-36, Cys-18-Cys-31, Cys-20-Cys-26, Cys-30-Cys-53, Cys-44-Cys-50, Cys-49-Cys-75, and Cys-62-Cys-82. Residue Asn-32 is glycosylated (N-linked (GlcNAc...) asparagine). Positions 68 to 70 (KCD) match the D/ECD-tripeptide; atypical (KCD) motif.

The protein belongs to the venom metalloproteinase (M12B) family. P-III subfamily. P-IIIa sub-subfamily. As to quaternary structure, monomer. Zn(2+) serves as cofactor. In terms of tissue distribution, expressed by the venom gland.

The protein localises to the secreted. Its function is as follows. The hemorrhagic metalloproteinase-disintegrin-like bothrojarin-1 is a potent inhibitor of collagen-induced platelet aggregation by blockage of alpha-2/beta-1 (ITGA2/ITGB1) integrin. It does not present any fibrinogen-clotting activity. This chain is Zinc metalloproteinase-disintegrin-like bothrojarin-4, found in Bothrops jararaca (Jararaca).